The primary structure comprises 61 residues: MLTRLSKLSALMFLLGVSACKSPPPVQSQRPEPAAWAMEKAQDLQQMLNSIITVSEVESTG.

The first 28 residues, 1 to 28 (MLTRLSKLSALMFLLGVSACKSPPPVQS), serve as a signal peptide directing secretion. Residues 29–61 (QRPEPAAWAMEKAQDLQQMLNSIITVSEVESTG) are Periplasmic-facing.

It belongs to the caudovirales o-spanin family. In terms of assembly, interacts (via C-terminus) with the spanin inner membrane subunit (via C-terminus). Part of the spanin complex which spans the entire periplasmic space. The spanin complex is composed of spanin inner membrane subunit and spanin outer membrane subunit.

The protein localises to the host cell outer membrane. Component of the spanin complex that disrupts the host outer membrane and participates in cell lysis during virus exit. The spanin complex conducts the final step in host lysis by disrupting the outer membrane after holin and endolysin action have permeabilized the inner membrane and degraded the host peptidoglycans. Host outer membrane disruption is possibly due to local fusion between the inner and outer membrane performed by the spanin complex. This is Probable spanin, outer lipoprotein subunit (Rz1) from Salmonella typhimurium (Bacteriophage P22).